The chain runs to 108 residues: LBH domain-containing protein 2 (108 aa).

The segment covering 1–11 has biased composition (pro residues); it reads MSTPRPAPPQP. A disordered region spans residues 1–108; the sequence is MSTPRPAPPQ…SEDPAAPARG (108 aa). One can recognise an LBH domain in the interval 37–62; the sequence is QRLPSIVVEPSEADPVESGELRWPLE. Positions 63–85 are enriched in low complexity; the sequence is SAQRGPSQSRAAAAPSPSLPGEP.

The polypeptide is LBH domain-containing protein 2 (Homo sapiens (Human)).